Here is a 334-residue protein sequence, read N- to C-terminus: Coiled-coil domain-containing protein 89 (334 aa).

Positions 75–318 form a coiled coil; the sequence is EAAQRFQSER…EAYKKHSGDL (244 aa).

It belongs to the CCDC89 family. As to quaternary structure, interacts (via C-terminus) with hey1/bc8 (via Orange domain). As to expression, in adults, expressed at varying levels in different organs including the liver and brain, with highest expression in the testis.

The protein resides in the cytoplasm. Its subcellular location is the nucleus. In Xenopus laevis (African clawed frog), this protein is Coiled-coil domain-containing protein 89.